Reading from the N-terminus, the 283-residue chain is Pantoate--beta-alanine ligase (283 aa).

This sequence belongs to the pantothenate synthetase family.

The enzyme catalyses (R)-pantoate + beta-alanine + ATP = (R)-pantothenate + AMP + diphosphate + H(+). The protein operates within cofactor biosynthesis; (R)-pantothenate biosynthesis; (R)-pantothenate from (R)-pantoate and beta-alanine: step 1/1. The chain is Pantoate--beta-alanine ligase (pan6) from Schizosaccharomyces pombe (strain 972 / ATCC 24843) (Fission yeast).